The following is a 201-amino-acid chain: Recombination protein RecR (201 aa).

The C4-type zinc-finger motif lies at 57–72; sequence CADCRTFTEQEVCNIC. Residues 81-176 form the Toprim domain; it reads GQICVVESPA…EASRIAHGVP (96 aa).

Belongs to the RecR family.

Its function is as follows. May play a role in DNA repair. It seems to be involved in an RecBC-independent recombinational process of DNA repair. It may act with RecF and RecO. This chain is Recombination protein RecR, found in Escherichia coli O6:K15:H31 (strain 536 / UPEC).